Consider the following 251-residue polypeptide: ATP synthase subunit a, chloroplastic (251 aa).

The next 6 membrane-spanning stretches (helical) occupy residues 3–23 (IVLL…IANV), 38–58 (IHGQ…FLSI), 99–119 (VPYI…GALI), 138–158 (INTT…AGLN), 203–223 (LVVA…LIFL), and 224–244 (GLFT…SYIG).

This sequence belongs to the ATPase A chain family. In terms of assembly, F-type ATPases have 2 components, CF(1) - the catalytic core - and CF(0) - the membrane proton channel. CF(1) has five subunits: alpha(3), beta(3), gamma(1), delta(1), epsilon(1). CF(0) has four main subunits: a, b, b' and c.

Its subcellular location is the plastid. It localises to the chloroplast thylakoid membrane. Functionally, key component of the proton channel; it plays a direct role in the translocation of protons across the membrane. The protein is ATP synthase subunit a, chloroplastic of Euglena gracilis.